A 302-amino-acid polypeptide reads, in one-letter code: Sulfate adenylyltransferase subunit 2 (302 aa).

Residues 279–302 form a disordered region; sequence ERQGRAIDHDSSGSMELKKRQGYF. Basic and acidic residues predominate over residues 280–302; sequence RQGRAIDHDSSGSMELKKRQGYF.

The protein belongs to the PAPS reductase family. CysD subfamily. In terms of assembly, heterodimer composed of CysD, the smaller subunit, and CysN.

The enzyme catalyses sulfate + ATP + H(+) = adenosine 5'-phosphosulfate + diphosphate. It functions in the pathway sulfur metabolism; hydrogen sulfide biosynthesis; sulfite from sulfate: step 1/3. Functionally, with CysN forms the ATP sulfurylase (ATPS) that catalyzes the adenylation of sulfate producing adenosine 5'-phosphosulfate (APS) and diphosphate, the first enzymatic step in sulfur assimilation pathway. APS synthesis involves the formation of a high-energy phosphoric-sulfuric acid anhydride bond driven by GTP hydrolysis by CysN coupled to ATP hydrolysis by CysD. This is Sulfate adenylyltransferase subunit 2 from Aliivibrio fischeri (strain ATCC 700601 / ES114) (Vibrio fischeri).